The chain runs to 438 residues: Aspartic proteinase nepenthesin-2 (438 aa).

Residues 1 to 24 (MASPLYSVVLGLAIVSAIVAPTSS) form the signal peptide. Positions 25 to 79 (TSRGTLLHHGQKRPQPGLRVDLEQVDSGKNLTKYELIKRAIKRGERRMRSINAML) are cleaved as a propeptide — activation peptide. The N-linked (GlcNAc...) asparagine glycan is linked to Asn-54. The region spanning 96-431 (YLMNVAIGTP…DLQNLAVSFV (336 aa)) is the Peptidase A1 domain. Residue Asp-114 is part of the active site. 6 disulfide bridges follow: Cys-124/Cys-127, Cys-130/Cys-204, Cys-151/Cys-169, Cys-156/Cys-164, Cys-241/Cys-435, and Cys-354/Cys-395. Asp-315 is an active-site residue.

It belongs to the peptidase A1 family.

The protein localises to the secreted. The enzyme catalyses Similar to pepsin, but also cleaves on either side of Asp and at Lys-|-Arg.. With respect to regulation, inhibited by pepstatin and by diazoacetyl-D,L-norleucine methyl ester (DAN) in the presence of Cu(2+) ions. Functionally, extracellular proteinase found in the pitcher fluid of carnivorous plants. Digest prey for nitrogen uptake. This is Aspartic proteinase nepenthesin-2 (nep2) from Nepenthes gracilis (Slender pitcher plant).